The chain runs to 212 residues: Uracil phosphoribosyltransferase (212 aa).

Residues arginine 78, arginine 103, and 130–138 (DPMLATGGS) contribute to the 5-phospho-alpha-D-ribose 1-diphosphate site. Residues isoleucine 193 and 198–200 (GDA) each bind uracil. Aspartate 199 is a 5-phospho-alpha-D-ribose 1-diphosphate binding site.

It belongs to the UPRTase family. The cofactor is Mg(2+).

It carries out the reaction UMP + diphosphate = 5-phospho-alpha-D-ribose 1-diphosphate + uracil. It participates in pyrimidine metabolism; UMP biosynthesis via salvage pathway; UMP from uracil: step 1/1. With respect to regulation, allosterically activated by GTP. Its function is as follows. Catalyzes the conversion of uracil and 5-phospho-alpha-D-ribose 1-diphosphate (PRPP) to UMP and diphosphate. The sequence is that of Uracil phosphoribosyltransferase from Ectopseudomonas mendocina (strain ymp) (Pseudomonas mendocina).